The chain runs to 310 residues: HPr kinase/phosphorylase (310 aa).

Active-site residues include His136 and Lys157. 151–158 (GDSGIGKS) is a binding site for ATP. Ser158 provides a ligand contact to Mg(2+). Asp175 serves as the catalytic Proton acceptor; for phosphorylation activity. Proton donor; for dephosphorylation activity. An important for the catalytic mechanism of both phosphorylation and dephosphorylation region spans residues 199–208 (LEIRGLGIIN). Glu200 contacts Mg(2+). Arg241 is an active-site residue. An important for the catalytic mechanism of dephosphorylation region spans residues 262 to 267 (PVRPGR).

The protein belongs to the HPrK/P family. In terms of assembly, homohexamer. The cofactor is Mg(2+).

It carries out the reaction [HPr protein]-L-serine + ATP = [HPr protein]-O-phospho-L-serine + ADP + H(+). The catalysed reaction is [HPr protein]-O-phospho-L-serine + phosphate + H(+) = [HPr protein]-L-serine + diphosphate. Catalyzes the ATP- as well as the pyrophosphate-dependent phosphorylation of a specific serine residue in HPr, a phosphocarrier protein of the phosphoenolpyruvate-dependent sugar phosphotransferase system (PTS). HprK/P also catalyzes the pyrophosphate-producing, inorganic phosphate-dependent dephosphorylation (phosphorolysis) of seryl-phosphorylated HPr (P-Ser-HPr). The two antagonistic activities of HprK/P are regulated by several intracellular metabolites, which change their concentration in response to the absence or presence of rapidly metabolisable carbon sources (glucose, fructose, etc.) in the growth medium. Therefore, by controlling the phosphorylation state of HPr, HPrK/P is a sensor enzyme that plays a major role in the regulation of carbon metabolism and sugar transport: it mediates carbon catabolite repression (CCR), and regulates PTS-catalyzed carbohydrate uptake and inducer exclusion. In Staphylococcus epidermidis (strain ATCC 35984 / DSM 28319 / BCRC 17069 / CCUG 31568 / BM 3577 / RP62A), this protein is HPr kinase/phosphorylase.